A 117-amino-acid polypeptide reads, in one-letter code: Transcription elongation factor SPT4-B (117 aa).

The tract at residues 1-40 is interaction with SUPT5H; it reads MALETVPKDLRHLRACLLCSLVKTIDQFEYDGCDNCDAYL. The segment at 16 to 36 adopts a C4-type zinc-finger fold; the sequence is CLLCSLVKTIDQFEYDGCDNC.

The protein belongs to the SPT4 family. Interacts with SUPT5H to form DSIF. DSIF interacts with the positive transcription elongation factor b complex (P-TEFb complex), which is composed of CDK9 and cyclin-T (CCNT1 or CCNT2). DSIF interacts with RNA polymerase II, and this interaction is reduced by phosphorylation of the C-terminal domain (CTD) of POLR2A by P-TEFb. DSIF also interacts with the NELF complex, which is composed of WHSC2/NELFA, COBRA1/NELFB, TH1L/NELFD and RDBP/NELFE, and this interaction occurs following prior binding of DSIF to RNA polymerase II. DSIF also interacts with HRMT1L2/PRMT1, HTATSF1/TATSF1, RNGTT/CAP1A, SKB1/PRMT5, SUPT6H, and can interact with PIN1. In terms of processing, ubiquitinated by Ubr5 when not assembled in the DSIF complex, leading to its degradation: Ubr5 recognizes and binds a degron that is not accessible when Supt4h1b is part of the DSIF complex. As to expression, expressed in brain, heart and liver.

It localises to the nucleus. Functionally, component of the DRB sensitivity-inducing factor complex (DSIF complex), which regulates mRNA processing and transcription elongation by RNA polymerase II. DSIF positively regulates mRNA capping by stimulating the mRNA guanylyltransferase activity of RNGTT/CAP1A. DSIF also acts cooperatively with the negative elongation factor complex (NELF complex) to enhance transcriptional pausing at sites proximal to the promoter. Transcriptional pausing may facilitate the assembly of an elongation competent RNA polymerase II complex. DSIF and NELF promote pausing by inhibition of the transcription elongation factor TFIIS/S-II. TFIIS/S-II binds to RNA polymerase II at transcription pause sites and stimulates the weak intrinsic nuclease activity of the enzyme. Cleavage of blocked transcripts by RNA polymerase II promotes the resumption of transcription from the new 3' terminus and may allow repeated attempts at transcription through natural pause sites. The sequence is that of Transcription elongation factor SPT4-B (Supt4h1b) from Mus musculus (Mouse).